Reading from the N-terminus, the 648-residue chain is Phosphomethylpyrimidine synthase (648 aa).

Residues N236, M265, Y294, H330, 350-352, 391-394, and E430 contribute to the substrate site; these read SRG and DGLR. H434 contributes to the Zn(2+) binding site. Y457 provides a ligand contact to substrate. H498 provides a ligand contact to Zn(2+). 3 residues coordinate [4Fe-4S] cluster: C578, C581, and C586.

This sequence belongs to the ThiC family. Homodimer. It depends on [4Fe-4S] cluster as a cofactor.

It carries out the reaction 5-amino-1-(5-phospho-beta-D-ribosyl)imidazole + S-adenosyl-L-methionine = 4-amino-2-methyl-5-(phosphooxymethyl)pyrimidine + CO + 5'-deoxyadenosine + formate + L-methionine + 3 H(+). Its pathway is cofactor biosynthesis; thiamine diphosphate biosynthesis. Functionally, catalyzes the synthesis of the hydroxymethylpyrimidine phosphate (HMP-P) moiety of thiamine from aminoimidazole ribotide (AIR) in a radical S-adenosyl-L-methionine (SAM)-dependent reaction. This chain is Phosphomethylpyrimidine synthase, found in Aliivibrio salmonicida (strain LFI1238) (Vibrio salmonicida (strain LFI1238)).